The primary structure comprises 448 residues: Antizyme inhibitor 1 (448 aa).

Belongs to the Orn/Lys/Arg decarboxylase class-II family. ODC antizyme inhibitor subfamily. Monomer. Interacts with OAZ1 and OAZ3; this interaction disrupts the interaction between the antizyme and ODC1. Post-translationally, ubiquitinated, leading to its proteasomal degradation; a process that is reduced in presence of antizyme OAZ1.

The protein localises to the nucleus. In terms of biological role, antizyme inhibitor (AZI) protein that positively regulates ornithine decarboxylase (ODC) activity and polyamine uptake. AZI is an enzymatically inactive ODC homolog that counteracts the negative effect of ODC antizymes (AZs) OAZ1, OAZ2 and OAZ3 on ODC activity by competing with ODC for antizyme-binding. Inhibits antizyme-dependent ODC degradation and releases ODC monomers from their inactive complex with antizymes, leading to formation of the catalytically active ODC homodimer and restoring polyamine production. This Pongo abelii (Sumatran orangutan) protein is Antizyme inhibitor 1 (AZIN1).